The primary structure comprises 397 residues: Phosphoglycerate kinase (397 aa).

Residues 26–28 (DLN), Arg42, 65–68 (HLGR), Arg119, and Arg152 each bind substrate. ATP-binding positions include Lys203, Glu325, and 351–354 (GGDT).

Belongs to the phosphoglycerate kinase family. In terms of assembly, monomer.

Its subcellular location is the cytoplasm. The enzyme catalyses (2R)-3-phosphoglycerate + ATP = (2R)-3-phospho-glyceroyl phosphate + ADP. It functions in the pathway carbohydrate degradation; glycolysis; pyruvate from D-glyceraldehyde 3-phosphate: step 2/5. This is Phosphoglycerate kinase from Bordetella bronchiseptica (strain ATCC BAA-588 / NCTC 13252 / RB50) (Alcaligenes bronchisepticus).